Consider the following 504-residue polypeptide: Maturase K (504 aa).

It belongs to the intron maturase 2 family. MatK subfamily.

It is found in the plastid. Its subcellular location is the chloroplast. Its function is as follows. Usually encoded in the trnK tRNA gene intron. Probably assists in splicing its own and other chloroplast group II introns. The polypeptide is Maturase K (Quercus suber (Cork oak)).